The sequence spans 29 residues: Cyclotide mela-2 (29 aa).

The segment at residues 1-29 (GKPTCGETCFKGKCYTPGCTCSYPLCKKD) is a cross-link (cyclopeptide (Gly-Asp)). 3 cysteine pairs are disulfide-bonded: cysteine 5–cysteine 19, cysteine 9–cysteine 21, and cysteine 14–cysteine 26.

In terms of processing, this is a cyclic peptide. Post-translationally, contains 3 disulfide bonds.

In terms of biological role, probably participates in a plant defense mechanism (Potential). Binds to and induces leakage in phospholipd membranes, particularly ones containing 1-palmitoyl-2-oleophosphatidylethanolamine (POPE). In vitro, displays cytotoxicity against cultured cells but no hemolytic activity towards fresh erythrocytes. Not active against Gram-negative bacterium E.coli ATCC 25922 or Gram-positive bacterium S.aureus ATCC 25923 up to a concentration of 64 uM. The polypeptide is Cyclotide mela-2 (Melicytus latifolius (Norfolk Island mahoe)).